We begin with the raw amino-acid sequence, 493 residues long: Transcript termination protein OPG145 (493 aa).

The Helicase ATP-binding domain maps to 100–256 (MIKLKRPLYI…NSIINIAKLS (157 aa)). 113-120 (LACGFGKT) is an ATP binding site. The short motif at 206 to 209 (DESH) is the DESH box element.

It belongs to the helicase family. Poxviruses subfamily. Interacts with OPG087. Might be part of a transcription complex composed at least of OPG087, OPG110, and OPG145.

It localises to the virion. Its function is as follows. DNA helicase which seems to act as a postreplicative transcription termination factor. Involved in ATP-dependent release of nascent RNA. Forms a stable complex with single-stranded DNA, and to a lesser extent RNA. The protein is Transcript termination protein OPG145 (OPG145) of Variola virus (isolate Human/India/Ind3/1967) (VARV).